A 332-amino-acid polypeptide reads, in one-letter code: Ribosomal RNA small subunit methyltransferase C (332 aa).

The protein belongs to the methyltransferase superfamily. RsmC family. In terms of assembly, monomer.

The protein localises to the cytoplasm. The catalysed reaction is guanosine(1207) in 16S rRNA + S-adenosyl-L-methionine = N(2)-methylguanosine(1207) in 16S rRNA + S-adenosyl-L-homocysteine + H(+). Functionally, specifically methylates the guanine in position 1207 of 16S rRNA in the 30S particle. This is Ribosomal RNA small subunit methyltransferase C from Pseudomonas aeruginosa (strain LESB58).